Consider the following 88-residue polypeptide: MAVVLRLSRAGTHKAPFYHVVATDSRNARDGKYLEDVGIYDPTKRPERIELKVERIEHWLKAGAKPSQTVAMILKRAAKAAAPAAPKA.

The protein belongs to the bacterial ribosomal protein bS16 family.

In Anaeromyxobacter dehalogenans (strain 2CP-1 / ATCC BAA-258), this protein is Small ribosomal subunit protein bS16.